Consider the following 102-residue polypeptide: Small ribosomal subunit protein uS10 (102 aa).

The protein belongs to the universal ribosomal protein uS10 family. As to quaternary structure, part of the 30S ribosomal subunit.

Functionally, involved in the binding of tRNA to the ribosomes. This chain is Small ribosomal subunit protein uS10, found in Brevibacillus brevis (strain 47 / JCM 6285 / NBRC 100599).